Here is a 554-residue protein sequence, read N- to C-terminus: MERLCWGWWWHLGILCLMHWAAGDTGSKTKSCSEVKQVYLAKGFSLNGAPQSEISGEHLRICPQGYTCCTSEMEENFANISRVEFEAKLRESSASIQRLLTTQHRNFDSYFQDLLNTSERVLQERFPSQYGDLYSQNSKIFRDLYSELRQYYRGSGINLEEALIEFWSRLLERVFKAQHTQYSFSEEYMDCLVKQYEQLKPFGDTPREVKLKAARAFIAARSFVQGLNAAADVVRKANQVPMSTECARAVMKLVYCPHCRGHSSIKLCSNYCWNVMRGCLANQADLDSEWRNLIESLLLVADKFNGASNVENIVGAIHTKISEAITHMQENKELLTNKVFKICGTPKKTNKGSKSEERRRKGKATQEDKSAVATMDNLISDVKGILSDIQDYWVSLPSLFCTEKVTAGPGNEDKCWNGITKGRYMPEPMGSGLANQINNPEVDVDITKPDMTIRQQIMQLKIMTSRLRNAYNGNDVDFQDTSDDMSGSGSGDGCNEDLCGSGRKLSRETVIIQPATHAVPRQPNPGETGKGTRLSSWDLLICLVALLVAQCTRW.

A signal peptide spans 1–21; that stretch reads MERLCWGWWWHLGILCLMHWA. Intrachain disulfides connect cysteine 32–cysteine 68, cysteine 62–cysteine 256, cysteine 69–cysteine 259, cysteine 191–cysteine 343, cysteine 246–cysteine 279, cysteine 268–cysteine 415, and cysteine 272–cysteine 401. 2 N-linked (GlcNAc...) asparagine glycosylation sites follow: asparagine 79 and asparagine 116. The disordered stretch occupies residues 346 to 369; the sequence is PKKTNKGSKSEERRRKGKATQEDK. Positions 353–369 are enriched in basic and acidic residues; the sequence is SKSEERRRKGKATQEDK. 3 O-linked (Xyl...) (heparan sulfate) serine glycosylation sites follow: serine 486, serine 488, and serine 490.

Belongs to the glypican family. In terms of processing, O-glycosylated with heparan sulfate side chains.

It localises to the cell membrane. Its subcellular location is the secreted. The protein resides in the extracellular space. Functionally, cell surface proteoglycan that bears heparan sulfate. The polypeptide is Glypican-1 (gpc1) (Xenopus tropicalis (Western clawed frog)).